A 676-amino-acid chain; its full sequence is DNA ligase (676 aa).

Residues 35-39 (DYEFD), 84-85 (SL), and Glu118 contribute to the NAD(+) site. The active-site N6-AMP-lysine intermediate is Lys120. NAD(+) contacts are provided by Arg141, Glu184, Lys299, and Lys323. 4 residues coordinate Zn(2+): Cys417, Cys420, Cys435, and Cys441. Residues 600–676 (LINRNFEGVN…ISEDEFNAML (77 aa)) form the BRCT domain.

The protein belongs to the NAD-dependent DNA ligase family. LigA subfamily. The cofactor is Mg(2+). Mn(2+) is required as a cofactor.

The catalysed reaction is NAD(+) + (deoxyribonucleotide)n-3'-hydroxyl + 5'-phospho-(deoxyribonucleotide)m = (deoxyribonucleotide)n+m + AMP + beta-nicotinamide D-nucleotide.. In terms of biological role, DNA ligase that catalyzes the formation of phosphodiester linkages between 5'-phosphoryl and 3'-hydroxyl groups in double-stranded DNA using NAD as a coenzyme and as the energy source for the reaction. It is essential for DNA replication and repair of damaged DNA. This Chlorobium phaeobacteroides (strain DSM 266 / SMG 266 / 2430) protein is DNA ligase.